We begin with the raw amino-acid sequence, 464 residues long: GDNF family receptor alpha-2 (464 aa).

The N-terminal stretch at M1–A21 is a signal peptide. Cystine bridges form between C40–C93, C47–C53, C63–C78, C95–C105, C161–C222, C168–C174, C185–C200, C195–C241, C224–C229, C251–C323, C258–C264, C275–C293, C285–C347, and C325–C335. N52 is a glycosylation site (N-linked (GlcNAc...) asparagine). N-linked (GlcNAc...) asparagine glycosylation is present at N357. A disordered region spans residues M363–T392. Residues T381–T392 show a composition bias toward low complexity. The N-linked (GlcNAc...) asparagine glycan is linked to N413. The GPI-anchor amidated serine moiety is linked to residue S443. The propeptide at C444–Q464 is removed in mature form.

It belongs to the GDNFR family. As to quaternary structure, interacts with NRTN ligand and RET: forms a 2:2:2 ternary complex composed of NRTN ligand, GFRA2 and RET receptor. Also forms a 4:4:4 tetrameric complex composed of 4 copies of NRTN ligand, GFRA2 and RET receptor, which prevents endocytosis of RET. Interacts with SORL1. Neurons of the superior cervical and dorsal root ganglia, and adult brain and testis. Low level in the substantia nigra, spleen and adrenal gland. Isoform 1, isoform 2 and isoform 3 are all expressed in brain, liver, ileum, spleen, heart and kidney. In brain, isoform 1 is most abundant, isoform 2 slightly less and isoform 3 is lowest. No significant levels of isoform 1, isoform 2 or isoform 3 expression in testis.

It localises to the cell membrane. Receptor for neurturin (NRTN), a growth factor that supports the survival of sympathetic neurons. NRTN-binding leads to autophosphorylation and activation of the RET receptor. Also able to mediate GDNF signaling through the RET tyrosine kinase receptor. Its function is as follows. Participates in NRTN-induced 'Ser-727' phosphorylation of STAT3. This Mus musculus (Mouse) protein is GDNF family receptor alpha-2.